A 355-amino-acid chain; its full sequence is UDP-N-acetylglucosamine--N-acetylmuramyl-(pentapeptide) pyrophosphoryl-undecaprenol N-acetylglucosamine transferase (355 aa).

Residues threonine 15–glycine 17, asparagine 127, arginine 163, serine 191, isoleucine 244, alanine 263–glutamate 268, and glutamine 288 each bind UDP-N-acetyl-alpha-D-glucosamine.

It belongs to the glycosyltransferase 28 family. MurG subfamily.

The protein localises to the cell inner membrane. The enzyme catalyses di-trans,octa-cis-undecaprenyl diphospho-N-acetyl-alpha-D-muramoyl-L-alanyl-D-glutamyl-meso-2,6-diaminopimeloyl-D-alanyl-D-alanine + UDP-N-acetyl-alpha-D-glucosamine = di-trans,octa-cis-undecaprenyl diphospho-[N-acetyl-alpha-D-glucosaminyl-(1-&gt;4)]-N-acetyl-alpha-D-muramoyl-L-alanyl-D-glutamyl-meso-2,6-diaminopimeloyl-D-alanyl-D-alanine + UDP + H(+). It functions in the pathway cell wall biogenesis; peptidoglycan biosynthesis. Functionally, cell wall formation. Catalyzes the transfer of a GlcNAc subunit on undecaprenyl-pyrophosphoryl-MurNAc-pentapeptide (lipid intermediate I) to form undecaprenyl-pyrophosphoryl-MurNAc-(pentapeptide)GlcNAc (lipid intermediate II). This is UDP-N-acetylglucosamine--N-acetylmuramyl-(pentapeptide) pyrophosphoryl-undecaprenol N-acetylglucosamine transferase from Cronobacter sakazakii (strain ATCC BAA-894) (Enterobacter sakazakii).